Reading from the N-terminus, the 152-residue chain is Large ribosomal subunit protein uL13 (152 aa).

The protein belongs to the universal ribosomal protein uL13 family. As to quaternary structure, part of the 50S ribosomal subunit.

In terms of biological role, this protein is one of the early assembly proteins of the 50S ribosomal subunit, although it is not seen to bind rRNA by itself. It is important during the early stages of 50S assembly. In Wolbachia pipientis subsp. Culex pipiens (strain wPip), this protein is Large ribosomal subunit protein uL13.